A 210-amino-acid polypeptide reads, in one-letter code: Small ribosomal subunit protein uS4 (210 aa).

An S4 RNA-binding domain is found at 100–160 (GRLDNVVYRM…EKSKNQLRVK (61 aa)).

Belongs to the universal ribosomal protein uS4 family. Part of the 30S ribosomal subunit. Contacts protein S5. The interaction surface between S4 and S5 is involved in control of translational fidelity.

In terms of biological role, one of the primary rRNA binding proteins, it binds directly to 16S rRNA where it nucleates assembly of the body of the 30S subunit. Its function is as follows. With S5 and S12 plays an important role in translational accuracy. The chain is Small ribosomal subunit protein uS4 from Alcanivorax borkumensis (strain ATCC 700651 / DSM 11573 / NCIMB 13689 / SK2).